Here is a 790-residue protein sequence, read N- to C-terminus: Tumor necrosis factor alpha-induced protein 3 (790 aa).

Alanine 2 is modified (N-acetylalanine). Residues 58-300 form a TRAF-binding region; that stretch reads PQFREIIHKA…LTDPENEMKE (243 aa). In terms of domain architecture, OTU spans 92-263; sequence LVALKTNGDG…SHHFVPLVTL (172 aa). Residue aspartate 100 is part of the active site. The Nucleophile role is filled by cysteine 103. Interaction with ubiquitin regions lie at residues 157–159, 190–192, and 224–227; these read LCY, SLE, and FAPL. Histidine 256 acts as the Proton acceptor in catalysis. The segment covering 357–368 has biased composition (basic and acidic residues); sequence QENSEQGRREGH. Positions 357–377 are disordered; sequence QENSEQGRREGHAQNPMEPSV. Residues 369–775 form an interaction with TNIP1 region; the sequence is AQNPMEPSVP…ACDHFGNAKC (407 aa). The A20-type 1 zinc finger occupies 381–416; sequence SLMDVKCETPNCPFFMSVNTQPLCHECSERRQKNQN. An interaction with RIPK1 region spans residues 386 to 453; that stretch reads KCETPNCPFF…EPLAWNPEES (68 aa). Positions 387, 392, 404, and 407 each coordinate Zn(2+). Disordered stretches follow at residues 415 to 434 and 447 to 468; these read QNKLPKLNSKPGPEGLPGMA and AWNPEESTGGPHSAPPTAPSPF. Phosphoserine is present on serine 459. 2 consecutive A20-type zinc fingers follow at residues 472–507 and 515–548; these read ETTAMKCRSPGCPFTLNVQHNGFCERCHNARQLHAS and HLDPGKCQACLQDVTRTFNGICSTCFKRTTAEAS. Zn(2+) is bound by residues cysteine 478, cysteine 483, cysteine 495, cysteine 498, cysteine 521, cysteine 524, cysteine 536, and cysteine 539. Positions 550 to 583 are disordered; that stretch reads SLSTSLPPSCHQRSKSDPSRLVRSPSPHSCHRAG. Residue serine 575 is modified to Phosphoserine. An A20-type 4 zinc finger spans residues 601 to 636; the sequence is RTGTSKCRKAGCVYFGTPENKGFCTLCFIEYRENKH. The segment at 605–655 is required for proteasomal degradation of UBE2N and UBE2D3, TRAF6 deubiquitination, and TAX1BP1 interaction with UBE2N; it reads SKCRKAGCVYFGTPENKGFCTLCFIEYRENKHFAAASGKVSPTASRFQNTI. The segment at 606-790 is sufficient for inhibitory activity of TNF-induced NF-kappa-B activity; sequence KCRKAGCVYF…ECFQFKQMYG (185 aa). Zn(2+) is bound by residues cysteine 607, cysteine 612, cysteine 624, and cysteine 627. Serine 645 is subject to Phosphoserine. The A20-type 5 zinc finger occupies 651 to 686; sequence FQNTIPCLGRECGTLGSTMFEGYCQKCFIEAQNQRF. Cysteine 657, cysteine 662, cysteine 674, and cysteine 677 together coordinate Zn(2+). The span at 689–705 shows a compositional bias: basic and acidic residues; it reads AKRTEEQLRSSQRRDVP. The interval 689–712 is disordered; sequence AKRTEEQLRSSQRRDVPRTTQSTS. Positions 697–790 are required for lysosomal localization and for TRAF2 lysosomal degradation; that stretch reads RSSQRRDVPR…ECFQFKQMYG (94 aa). 2 consecutive A20-type zinc fingers follow at residues 710–745 and 756–790; these read STSRPKCARASCKNILACRSEELCMECQHPNQRMGP and DPPKQRCRAPACDHFGNAKCNGYCNECFQFKQMYG. Positions 716, 721, 733, 736, 762, 767, 779, and 782 each coordinate Zn(2+).

Belongs to the peptidase C64 family. Homodimer. Interacts with TNIP1, TAX1BP1 and TRAF2. Interacts with RNF11, ITCH and TAX1BP1 only after TNF stimulation; these interaction are transient and they are lost after 1 hour of stimulation with TNF. Interacts with YWHAZ and YWHAH. Interacts with IKBKG; the interaction is induced by TNF stimulation and by polyubiquitin. Interacts with RIPK1. Interacts with UBE2N; the interaction requires TAX1BP1. Interacts with TRAF6; the interaction is inhibited by HTLV-1 protein Tax. Proteolytically cleaved by MALT1 upon TCR stimulation; disrupts NF-kappa-B inhibitory function and results in increased IL-2 production. It is proposed that only a fraction of TNFAIP3 colocalized with TCR and CBM complex is cleaved, leaving the main TNFAIP3 pool intact.

The protein localises to the cytoplasm. Its subcellular location is the nucleus. The protein resides in the lysosome. The enzyme catalyses Thiol-dependent hydrolysis of ester, thioester, amide, peptide and isopeptide bonds formed by the C-terminal Gly of ubiquitin (a 76-residue protein attached to proteins as an intracellular targeting signal).. Functionally, ubiquitin-editing enzyme that contains both ubiquitin ligase and deubiquitinase activities. Involved in immune and inflammatory responses signaled by cytokines, such as TNF-alpha and IL-1 beta, or pathogens via Toll-like receptors (TLRs) through terminating NF-kappa-B activity. Essential component of a ubiquitin-editing protein complex, comprising also RNF11, ITCH and TAX1BP1, that ensures the transient nature of inflammatory signaling pathways. In cooperation with TAX1BP1 promotes disassembly of E2-E3 ubiquitin protein ligase complexes in IL-1R and TNFR-1 pathways; affected are at least E3 ligases TRAF6, TRAF2 and BIRC2, and E2 ubiquitin-conjugating enzymes UBE2N and UBE2D3. In cooperation with TAX1BP1 promotes ubiquitination of UBE2N and proteasomal degradation of UBE2N and UBE2D3. Upon TNF stimulation, deubiquitinates 'Lys-63'-polyubiquitin chains on RIPK1 and catalyzes the formation of 'Lys-48'-polyubiquitin chains. This leads to RIPK1 proteasomal degradation and consequently termination of the TNF- or LPS-mediated activation of NF-kappa-B. Deubiquitinates TRAF6 probably acting on 'Lys-63'-linked polyubiquitin. Upon T-cell receptor (TCR)-mediated T-cell activation, deubiquitinates 'Lys-63'-polyubiquitin chains on MALT1 thereby mediating disassociation of the CBM (CARD11:BCL10:MALT1) and IKK complexes and preventing sustained IKK activation. Deubiquitinates NEMO/IKBKG; the function is facilitated by TNIP1 and leads to inhibition of NF-kappa-B activation. Upon stimulation by bacterial peptidoglycans, probably deubiquitinates RIPK2. Can also inhibit I-kappa-B-kinase (IKK) through a non-catalytic mechanism which involves polyubiquitin; polyubiquitin promotes association with IKBKG and prevents IKK MAP3K7-mediated phosphorylation. Targets TRAF2 for lysosomal degradation. In vitro able to deubiquitinate 'Lys-11'-, 'Lys-48'- and 'Lys-63' polyubiquitin chains. Inhibitor of programmed cell death. Has a role in the function of the lymphoid system. Required for LPS-induced production of pro-inflammatory cytokines and IFN beta in LPS-tolerized macrophages. This is Tumor necrosis factor alpha-induced protein 3 (TNFAIP3) from Homo sapiens (Human).